Here is a 183-residue protein sequence, read N- to C-terminus: Dual-action ribosomal maturation protein DarP (183 aa).

It belongs to the DarP family.

Its subcellular location is the cytoplasm. Member of a network of 50S ribosomal subunit biogenesis factors which assembles along the 30S-50S interface, preventing incorrect 23S rRNA structures from forming. Promotes peptidyl transferase center (PTC) maturation. The polypeptide is Dual-action ribosomal maturation protein DarP (Escherichia coli O81 (strain ED1a)).